Reading from the N-terminus, the 296-residue chain is Protoheme IX farnesyltransferase (296 aa).

8 consecutive transmembrane segments (helical) span residues 8–28 (VTKP…FFLA), 35–55 (WILM…GCAI), 84–104 (AAFF…SYFT), 107–127 (VAVA…TMYF), 132–152 (VYGT…GYCA), 162–182 (AILL…IAIF), 215–235 (FAVV…FMVV), and 264–284 (VFFF…LDFN).

It belongs to the UbiA prenyltransferase family. Protoheme IX farnesyltransferase subfamily.

It localises to the cell inner membrane. The catalysed reaction is heme b + (2E,6E)-farnesyl diphosphate + H2O = Fe(II)-heme o + diphosphate. It participates in porphyrin-containing compound metabolism; heme O biosynthesis; heme O from protoheme: step 1/1. Functionally, converts heme B (protoheme IX) to heme O by substitution of the vinyl group on carbon 2 of heme B porphyrin ring with a hydroxyethyl farnesyl side group. This Marinomonas sp. (strain MWYL1) protein is Protoheme IX farnesyltransferase.